A 1091-amino-acid chain; its full sequence is Voltage-dependent calcium channel subunit alpha-2/delta-3 (1091 aa).

The first 28 residues, Met1 to Gly28, serve as a signal peptide directing secretion. Residues Asp29 to Gly1068 are Extracellular-facing. Residue Asn166 is glycosylated (N-linked (GlcNAc...) asparagine). A VWFA domain is found at Asp256–Leu438. A divalent metal cation-binding residues include Asp262, Ser264, and Ser266. Positions Asp262–Ser266 match the MIDAS-like motif motif. N-linked (GlcNAc...) asparagine glycosylation is present at Asn309. The cysteines at positions 412 and 1055 are disulfide-linked. The region spanning Trp452–Arg549 is the Cache domain. N-linked (GlcNAc...) asparagine glycans are attached at residues Asn553, Asn632, and Asn793. A Phosphotyrosine modification is found at Tyr924. A helical membrane pass occupies residues Gly1069–Phe1089. Residues Ser1090–Arg1091 lie on the Cytoplasmic side of the membrane.

Belongs to the calcium channel subunit alpha-2/delta family. In terms of assembly, dimer formed of alpha-2-2 and delta-2 chains; disulfide-linked. Voltage-dependent calcium channels are multisubunit complexes, consisting of alpha-1 (CACNA1), alpha-2 (CACNA2D), beta (CACNB) and delta (CACNA2D) subunits in a 1:1:1:1 ratio. In terms of processing, N-glycosylated. Post-translationally, may be proteolytically processed into subunits alpha-2-3 and delta-3 that are disulfide-linked. It is however unclear whether such cleavage really takes place in vivo and has a functional role. As to expression, only detected in brain. Not present in lung, testis, aorta, spleen, jejunum, ventricular muscle and kidney (at protein level). According to PubMed:11687876, it is brain-specific, while according to PubMed:11245980, it is widely expressed.

The protein localises to the membrane. In terms of biological role, the alpha-2/delta subunit of voltage-dependent calcium channels regulates calcium current density and activation/inactivation kinetics of the calcium channel. Acts as a regulatory subunit for P/Q-type calcium channel (CACNA1A), N-type (CACNA1B), L-type (CACNA1C OR CACNA1D) but not T-type (CACNA1G). The protein is Voltage-dependent calcium channel subunit alpha-2/delta-3 (CACNA2D3) of Homo sapiens (Human).